A 445-amino-acid chain; its full sequence is Response regulator protein PilR (445 aa).

Residues 5-119 enclose the Response regulatory domain; it reads KALIVDDEPD…RLRELVATAL (115 aa). 4-aspartylphosphate is present on residues D11 and D54. Residues 135 to 364 form the Sigma-54 factor interaction domain; that stretch reads LLGESPPMRA…LENMLERAYT (230 aa). ATP-binding positions include 163-170 and 226-235; these read GESGSGKE and ASGGTLFLDE. A DNA-binding region (H-T-H motif) is located at residues 418–437; the sequence is RWNRTAAAQRLGLTFRSMRY.

In terms of processing, phosphorylated by PilS.

It is found in the cytoplasm. Its function is as follows. Member of the two-component regulatory system PilS/PilR that regulates the expression of multiple genes including the type IV pilus (T4P) major subunit PilA. Thereby, plays a major role in the regulation of multiple motility pathways. Upon appropriate environmental signals, the histidine kinase PilS transfers the phosphoryl group onto PilR. In turn, PilR functions as a transcriptional activator by direct binding to a cis-acting sequence upstream of the pilin gene promoter leading to its activation. This chain is Response regulator protein PilR (pilR), found in Pseudomonas aeruginosa (strain ATCC 15692 / DSM 22644 / CIP 104116 / JCM 14847 / LMG 12228 / 1C / PRS 101 / PAO1).